The chain runs to 263 residues: Proenkephalin-A (263 aa).

The N-terminal stretch at 1–24 is a signal peptide; that stretch reads MARFLGLCTWLLALGPGLLATVRA. 3 disulfides stabilise this stretch: cysteine 26–cysteine 48, cysteine 30–cysteine 52, and cysteine 33–cysteine 65. Propeptides lie at residues 192 to 203 and 213 to 223; these read SPHLEDETKELQ and VGRPEWWMDYQ. Serine 247 is modified (phosphoserine).

Belongs to the opioid neuropeptide precursor family. Proenkephalin-A is cleaved by CTSL to generate Met-enkephalin. In terms of processing, processed and degraded by ACE. Post-translationally, probably cleaved by ACE. Processed by ACE to generate Met-enkephalin in the nucleus accumbens of the brain. In terms of processing, the N-terminal domain contains 6 conserved cysteines thought to be involved in disulfide bonding and/or processing. As to expression, secreted by neuroendocrine chromaffin cells through cromaffin granules.

Its subcellular location is the cytoplasmic vesicle. It localises to the secretory vesicle. The protein localises to the chromaffin granule lumen. The protein resides in the secreted. Functionally, neuropeptide that competes with and mimic the effects of opiate drugs. They play a role in a number of physiologic functions, including pain perception and responses to stress. In terms of biological role, met-enkephalin-Arg-Phe neuropeptide acts as a strong ligand of Mu-type opioid receptor OPRM1. Met-enkephalin-Arg-Phe-binding to OPRM1 in the nucleus accumbens of the brain increases activation of OPRM1, leading to long-term synaptic depression of glutamate release. Its function is as follows. Increases glutamate release in the striatum and decreases GABA concentration in the striatum. Increases glutamate release in the striatum. Functionally, enkelytin possesses antibacterial activity against Gram-positive bacteria such as Micrococcus luteus and Bacillus megaterium. The sequence is that of Proenkephalin-A (PENK) from Bos taurus (Bovine).